Reading from the N-terminus, the 568-residue chain is Glucose-6-phosphate isomerase, cytosolic 1 (568 aa).

Residue E360 is the Proton donor of the active site. Residues H391 and K516 contribute to the active site.

It belongs to the GPI family. As to quaternary structure, homodimer.

The protein localises to the cytoplasm. It catalyses the reaction alpha-D-glucose 6-phosphate = beta-D-fructose 6-phosphate. Its pathway is carbohydrate degradation; glycolysis; D-glyceraldehyde 3-phosphate and glycerone phosphate from D-glucose: step 2/4. The polypeptide is Glucose-6-phosphate isomerase, cytosolic 1 (PGIC1) (Clarkia williamsonii).